A 271-amino-acid polypeptide reads, in one-letter code: Ribosomal RNA small subunit methyltransferase A (271 aa).

Residues Asn-19, Leu-21, Gly-46, Glu-67, Asp-92, and Asn-114 each coordinate S-adenosyl-L-methionine.

Belongs to the class I-like SAM-binding methyltransferase superfamily. rRNA adenine N(6)-methyltransferase family. RsmA subfamily.

Its subcellular location is the cytoplasm. It catalyses the reaction adenosine(1518)/adenosine(1519) in 16S rRNA + 4 S-adenosyl-L-methionine = N(6)-dimethyladenosine(1518)/N(6)-dimethyladenosine(1519) in 16S rRNA + 4 S-adenosyl-L-homocysteine + 4 H(+). Its function is as follows. Specifically dimethylates two adjacent adenosines (A1518 and A1519) in the loop of a conserved hairpin near the 3'-end of 16S rRNA in the 30S particle. May play a critical role in biogenesis of 30S subunits. The chain is Ribosomal RNA small subunit methyltransferase A from Aeromonas hydrophila subsp. hydrophila (strain ATCC 7966 / DSM 30187 / BCRC 13018 / CCUG 14551 / JCM 1027 / KCTC 2358 / NCIMB 9240 / NCTC 8049).